The chain runs to 108 residues: UPF0060 membrane protein YnfA (108 aa).

Residues 1–5 are Periplasmic-facing; sequence MIKTT. Residues 6 to 26 form a helical membrane-spanning segment; the sequence is LLFFATALCEIIGCFLPWLWL. Residues 27-30 are Cytoplasmic-facing; sequence KRNA. A helical transmembrane segment spans residues 31–51; it reads SIWLLLPAGISLALFVWLLTL. Residues 52 to 60 lie on the Periplasmic side of the membrane; sequence HPAASGRVY. A helical transmembrane segment spans residues 61–81; the sequence is AAYGGVYVCTALMWLRVVDGV. Residues 82-84 are Cytoplasmic-facing; the sequence is KLS. A helical transmembrane segment spans residues 85–105; the sequence is LYDWTGALIALCGMLIIVAGW. Over 106–108 the chain is Periplasmic; it reads GRT.

This sequence belongs to the UPF0060 family.

It localises to the cell inner membrane. This Shigella flexneri serotype 5b (strain 8401) protein is UPF0060 membrane protein YnfA.